Consider the following 130-residue polypeptide: Metastasis-suppressor KiSS-1 (130 aa).

A signal peptide spans 1-19 (MISLASWQLLLLLCVASFG). The tract at residues 52–91 (RYAESKPGAAGLRARRTSPCPPVENPTGHQRPPCATRSRL) is disordered. Cysteine 71 and cysteine 85 are joined by a disulfide. Tyrosine 110 bears the Phosphotyrosine mark. Residues 110 to 119 (YNWNSFGLRY) are essential for receptor binding and receptor activation. Tyrosine amide is present on tyrosine 119.

Belongs to the KISS1 family. In terms of tissue distribution, highest levels in the cecum and colon. Moderate levels present in the liver, spleen, kidney, ovary, uterus and small intestine. Low levels in the stomach, pancreas and placenta. Expressed only moderately in the placenta. Persistent expression is detected in hypothalamus throughout postnatal development, with maximum expression levels at puberty in both male and female. Hypothalamic expression is sensitive to neonatal imprinting by estrogen. Expression is higher in the hypothalamus than in the brainstem and spinal cord. In the brain, metastin-like immunoreactivity is found mainly in three groups of cells: dorsomedial hypothalamic nucleus, nucleus of the solitary tract, and caudal ventrolateral medulla.

It localises to the secreted. Metastasis suppressor protein. May regulate events downstream of cell-matrix adhesion, perhaps involving cytoskeletal reorganization. Generates a C-terminally amidated peptide, metastin which functions as the endogenous ligand of the G-protein coupled receptor GPR54. The receptor is also essential for normal gonadotropin-released hormone physiology and for puberty. The hypothalamic KiSS1/GPR54 system is a pivotal factor in central regulation of the gonadotropic axis at puberty and in adulthood. Intracerebroventricular administration induces an increase in serum LH and FSH levels in prepubertal male and female as well as in adult animals. The protein is Metastasis-suppressor KiSS-1 (Kiss1) of Rattus norvegicus (Rat).